The primary structure comprises 158 residues: Large ribosomal subunit protein uL15 (158 aa).

The span at 1–13 (MKLNEIKDNEGST) shows a compositional bias: basic and acidic residues. A disordered region spans residues 1-45 (MKLNEIKDNEGSTHSRKRLGRGIGSGSGKTGGRGVKGQKSRSGVA). A compositionally biased stretch (gly residues) spans 21 to 35 (RGIGSGSGKTGGRGV).

This sequence belongs to the universal ribosomal protein uL15 family. As to quaternary structure, part of the 50S ribosomal subunit.

In terms of biological role, binds to the 23S rRNA. This chain is Large ribosomal subunit protein uL15, found in Rhizobium etli (strain CIAT 652).